Reading from the N-terminus, the 169-residue chain is Peptide deformylase (169 aa).

Positions 91 and 133 each coordinate Fe cation. Glu134 is a catalytic residue. His137 contacts Fe cation.

It belongs to the polypeptide deformylase family. Requires Fe(2+) as cofactor.

It catalyses the reaction N-terminal N-formyl-L-methionyl-[peptide] + H2O = N-terminal L-methionyl-[peptide] + formate. Its function is as follows. Removes the formyl group from the N-terminal Met of newly synthesized proteins. Requires at least a dipeptide for an efficient rate of reaction. N-terminal L-methionine is a prerequisite for activity but the enzyme has broad specificity at other positions. The sequence is that of Peptide deformylase from Erwinia tasmaniensis (strain DSM 17950 / CFBP 7177 / CIP 109463 / NCPPB 4357 / Et1/99).